The sequence spans 182 residues: MLDPRTRPRVVNVVSTSDLVQRVSAKKMAAMPCCMYDEAVYGGRCGYIKTPGMQGRVTVFISGKMISVGARSVRASFGQLHEARLHLVRNGAAGDCKIRPVVRNIVATVDAGRNVPIDRISSRMPGAVYDPGSFPGMILKGLDSCSFLVFASGKMVIAGAKSPDELRRSSFDLLTRLNNAGA.

2 consecutive repeat copies span residues 10–87 and 102–177.

The protein belongs to the TBP family.

In terms of biological role, general factor that plays a role in the activation of archaeal genes transcribed by RNA polymerase. Binds specifically to the TATA box promoter element which lies close to the position of transcription initiation. In Cenarchaeum symbiosum (strain A), this protein is TATA-box-binding protein (tbp).